The primary structure comprises 199 residues: Holliday junction branch migration complex subunit RuvA (199 aa).

The interval 1-64 (MIGRISGLLL…EDGHFLYGFA (64 aa)) is domain I. Residues 65–143 (TDEERTAFRQ…KALPQVAGAR (79 aa)) are domain II. The interval 144–154 (LAAVAGGAPDA) is flexible linker. The segment at 154 to 199 (AKSDILNALLALGYNEKEALGAMKGLAEDTGVSDGIRQALKLLSKA) is domain III.

The protein belongs to the RuvA family. As to quaternary structure, homotetramer. Forms an RuvA(8)-RuvB(12)-Holliday junction (HJ) complex. HJ DNA is sandwiched between 2 RuvA tetramers; dsDNA enters through RuvA and exits via RuvB. An RuvB hexamer assembles on each DNA strand where it exits the tetramer. Each RuvB hexamer is contacted by two RuvA subunits (via domain III) on 2 adjacent RuvB subunits; this complex drives branch migration. In the full resolvosome a probable DNA-RuvA(4)-RuvB(12)-RuvC(2) complex forms which resolves the HJ.

It is found in the cytoplasm. In terms of biological role, the RuvA-RuvB-RuvC complex processes Holliday junction (HJ) DNA during genetic recombination and DNA repair, while the RuvA-RuvB complex plays an important role in the rescue of blocked DNA replication forks via replication fork reversal (RFR). RuvA specifically binds to HJ cruciform DNA, conferring on it an open structure. The RuvB hexamer acts as an ATP-dependent pump, pulling dsDNA into and through the RuvAB complex. HJ branch migration allows RuvC to scan DNA until it finds its consensus sequence, where it cleaves and resolves the cruciform DNA. This chain is Holliday junction branch migration complex subunit RuvA, found in Azoarcus sp. (strain BH72).